A 145-amino-acid polypeptide reads, in one-letter code: Small ribosomal subunit protein eS19 (145 aa).

Position 23 is an N6-acetyllysine (Lys23). The residue at position 67 (Arg67) is an Omega-N-methylarginine. An N6-acetyllysine mark is found at Lys111 and Lys115. Lys143 bears the N6-succinyllysine mark.

Belongs to the eukaryotic ribosomal protein eS19 family. In terms of assembly, component of the small ribosomal subunit. Part of the small subunit (SSU) processome, composed of more than 70 proteins and the RNA chaperone small nucleolar RNA (snoRNA) U3. Interacts with RPS19BP1.

The protein resides in the cytoplasm. The protein localises to the nucleus. It localises to the nucleolus. Component of the small ribosomal subunit. The ribosome is a large ribonucleoprotein complex responsible for the synthesis of proteins in the cell. Required for pre-rRNA processing and maturation of 40S ribosomal subunits. Part of the small subunit (SSU) processome, first precursor of the small eukaryotic ribosomal subunit. During the assembly of the SSU processome in the nucleolus, many ribosome biogenesis factors, an RNA chaperone and ribosomal proteins associate with the nascent pre-rRNA and work in concert to generate RNA folding, modifications, rearrangements and cleavage as well as targeted degradation of pre-ribosomal RNA by the RNA exosome. This Rattus norvegicus (Rat) protein is Small ribosomal subunit protein eS19 (Rps19).